A 93-amino-acid chain; its full sequence is Co-chaperonin GroES (93 aa).

It belongs to the GroES chaperonin family. As to quaternary structure, heptamer of 7 subunits arranged in a ring. Interacts with the chaperonin GroEL.

Its subcellular location is the cytoplasm. Functionally, together with the chaperonin GroEL, plays an essential role in assisting protein folding. The GroEL-GroES system forms a nano-cage that allows encapsulation of the non-native substrate proteins and provides a physical environment optimized to promote and accelerate protein folding. GroES binds to the apical surface of the GroEL ring, thereby capping the opening of the GroEL channel. This chain is Co-chaperonin GroES, found in Streptococcus gordonii.